The primary structure comprises 150 residues: Large ribosomal subunit protein bL9 (150 aa).

The protein belongs to the bacterial ribosomal protein bL9 family.

Binds to the 23S rRNA. In Lactiplantibacillus plantarum (strain ATCC BAA-793 / NCIMB 8826 / WCFS1) (Lactobacillus plantarum), this protein is Large ribosomal subunit protein bL9.